The primary structure comprises 474 residues: Trehalose-6-phosphate synthase (474 aa).

Arg10 is a binding site for D-glucose 6-phosphate. Residue 22-23 participates in UDP-alpha-D-glucose binding; the sequence is GG. Residues Tyr77 and Asp131 each contribute to the D-glucose 6-phosphate site. 2 residues coordinate UDP-alpha-D-glucose: Arg263 and Lys268. Arg301 contributes to the D-glucose 6-phosphate binding site. UDP-alpha-D-glucose contacts are provided by residues Phe340 and 366–370; that span reads LVAKE.

It belongs to the glycosyltransferase 20 family. Homotetramer.

It catalyses the reaction D-glucose 6-phosphate + UDP-alpha-D-glucose = alpha,alpha-trehalose 6-phosphate + UDP + H(+). It participates in glycan biosynthesis; trehalose biosynthesis. Functionally, probably involved in the osmoprotection via the biosynthesis of trehalose. Catalyzes the transfer of glucose from UDP-alpha-D-glucose (UDP-Glc) to D-glucose 6-phosphate (Glc-6-P) to form trehalose-6-phosphate. Acts with retention of the anomeric configuration of the UDP-sugar donor. This Enterobacter sp. (strain 638) protein is Trehalose-6-phosphate synthase.